A 427-amino-acid chain; its full sequence is Enolase (427 aa).

Residue Gln-163 participates in (2R)-2-phosphoglycerate binding. Glu-205 acts as the Proton donor in catalysis. 3 residues coordinate Mg(2+): Asp-242, Glu-285, and Asp-312. 4 residues coordinate (2R)-2-phosphoglycerate: Lys-337, Arg-366, Ser-367, and Lys-388. Residue Lys-337 is the Proton acceptor of the active site.

It belongs to the enolase family. It depends on Mg(2+) as a cofactor.

It localises to the cytoplasm. It is found in the secreted. The protein localises to the cell surface. The enzyme catalyses (2R)-2-phosphoglycerate = phosphoenolpyruvate + H2O. The protein operates within carbohydrate degradation; glycolysis; pyruvate from D-glyceraldehyde 3-phosphate: step 4/5. Functionally, catalyzes the reversible conversion of 2-phosphoglycerate (2-PG) into phosphoenolpyruvate (PEP). It is essential for the degradation of carbohydrates via glycolysis. The sequence is that of Enolase from Rhodopseudomonas palustris (strain ATCC BAA-98 / CGA009).